Here is a 382-residue protein sequence, read N- to C-terminus: S-adenosylmethionine synthase (382 aa).

Residue H14 participates in ATP binding. A Mg(2+)-binding site is contributed by D16. E42 is a K(+) binding site. L-methionine contacts are provided by E55 and Q91. The segment at 91–101 (QSENIAMGVNL) is flexible loop. ATP contacts are provided by residues 156-158 (DMK), 222-223 (KF), D231, 237-238 (RK), A254, and K258. Residue D231 coordinates L-methionine. K262 provides a ligand contact to L-methionine.

It belongs to the AdoMet synthase family. In terms of assembly, homotetramer; dimer of dimers. It depends on Mg(2+) as a cofactor. Requires K(+) as cofactor.

Its subcellular location is the cytoplasm. The enzyme catalyses L-methionine + ATP + H2O = S-adenosyl-L-methionine + phosphate + diphosphate. It functions in the pathway amino-acid biosynthesis; S-adenosyl-L-methionine biosynthesis; S-adenosyl-L-methionine from L-methionine: step 1/1. Functionally, catalyzes the formation of S-adenosylmethionine (AdoMet) from methionine and ATP. The overall synthetic reaction is composed of two sequential steps, AdoMet formation and the subsequent tripolyphosphate hydrolysis which occurs prior to release of AdoMet from the enzyme. This is S-adenosylmethionine synthase from Mycoplasmopsis synoviae (strain 53) (Mycoplasma synoviae).